The sequence spans 149 residues: General odorant-binding protein 57c (149 aa).

An N-terminal signal peptide occupies residues Met1–Ser16. Cystine bridges form between Cys32–Cys70, Cys66–Cys117, and Cys106–Cys126.

This sequence belongs to the PBP/GOBP family.

Its function is as follows. Present in the aqueous fluid surrounding olfactory sensory dendrites and are thought to aid in the capture and transport of hydrophobic odorants into and through this fluid. In Drosophila melanogaster (Fruit fly), this protein is General odorant-binding protein 57c.